We begin with the raw amino-acid sequence, 710 residues long: Lactotransferrin (710 aa).

An N-terminal signal peptide occupies residues 1 to 19; it reads MKLVFLVLLFLGALGLCLA. Phe-10 carries the post-translational modification Phosphoserine; alternate. O-linked (GlcNAc) serine; alternate glycosylation is present at Phe-10. The segment at 20 to 24 is critical for glycosaminoglycan, lipid A, lysozyme and DNA binding; sequence GRRRS. Bactericidal and antifungal activity stretches follow at residues 20 to 29 and 39 to 49; these read GRRRSVQWCA and FQWQRNMRKVR. An important for full bactericidal and antifungal activities region spans residues 21–22; it reads RR. 2 consecutive Transferrin-like domains span residues 25-352 and 364-695; these read VQWC…NLRK and VVWC…NLKK. 2 cysteine pairs are disulfide-bonded: Cys-28-Cys-64 and Cys-38-Cys-55. Interaction with PspA stretches follow at residues 39 to 46 and 57 to 58; these read FQWQRNMR and KR. The interval 39–49 is interaction with lipopolysaccharide; that stretch reads FQWQRNMRKVR. The tract at residues 46-51 is involved in glycosaminoglycan binding; the sequence is RKVRGP. Asp-79 lines the Fe(3+) pocket. Residue Lys-92 is part of the active site. Tyr-111 contacts Fe(3+). 4 cysteine pairs are disulfide-bonded: Cys-134-Cys-217, Cys-176-Cys-192, Cys-189-Cys-200, and Cys-250-Cys-264. Hydrogencarbonate is bound by residues Thr-136, Arg-140, Ala-142, and Gly-143. Residue Asn-156 is glycosylated (N-linked (GlcNAc...) asparagine). Tyr-211 lines the Fe(3+) pocket. His-272 serves as a coordination point for Fe(3+). Ser-278 acts as the Nucleophile in catalysis. Disulfide bonds link Cys-367–Cys-399 and Cys-377–Cys-390. Residues Gln-379 and Ser-391 each participate in a glycyl lysine isopeptide (Lys-Gly) (interchain with G-Cter in ubiquitin) cross-link. Fe(3+) contacts are provided by Asp-414 and Tyr-454. Cystine bridges form between Cys-424-Cys-705, Cys-446-Cys-668, Cys-478-Cys-553, Cys-502-Cys-696, Cys-512-Cys-526, Cys-523-Cys-536, Cys-594-Cys-608, and Cys-646-Cys-651. Hydrogencarbonate contacts are provided by Thr-480, Arg-484, Ala-486, and Gly-487. Asn-497 carries an N-linked (GlcNAc...) asparagine glycan. Residue Tyr-547 participates in Fe(3+) binding. Residue His-616 participates in Fe(3+) binding. Asn-642 carries an N-linked (GlcNAc...) asparagine glycan.

The protein belongs to the transferrin family. In terms of assembly, monomer. Found in a complex with LTF, CLU, EPPIN and SEMG1. Found in a complex with MPO and LTF; interacts directly with CP, allows Fe(3+) incorporation into LTF and activation of CP ferroxidase activity. Post-translationally, phosphorylation at Ser-10 activates the transcriptional activity. Phosphorylation at Ser-10 also promotes proteasomal degradation. Alternatively can undergo O-GlcNAcylation at Ser-10. O-GlcNAcylation at Ser-10 inhibits DNA binding and negatively regulates the transcriptional activity. Alternatively can undergo phosphorylation at Ser-10. In terms of processing, poly-N-acetyllactosaminic carbohydrate moiety seems to be needed for TLR4 activation. High levels are found in saliva and tears, intermediate levels in serum and plasma, and low levels in urine. In kidney, detected in the distal collecting tubules in the medulla but not in the cortical region or in blood vessels. Detected in peripheral blood neutrophils (at protein level). Isoform 1 and isoform DeltaLf are expressed in breast, prostate, spleen, pancreas, kidney, small intestine, lung, skeletal muscle, uterus, thymus and fetal liver. Isoform 1 is expressed in brain, testis and peripheral blood leukocytes; isoform DeltaLf is barely detectable in these tissues. Isoform DeltaLf is expressed in placenta, liver and ovary; isoform 1 is barely detectable in these tissues. In kidney, isoform 1 is expressed at high levels in the collecting tubules of the medulla but at very low levels in the cortex.

It localises to the secreted. The protein resides in the cytoplasmic granule. Its subcellular location is the cytoplasm. The protein localises to the nucleus. Functionally, transferrins are iron binding transport proteins which can bind two Fe(3+) ions in association with the binding of an anion, usually bicarbonate. In terms of biological role, major iron-binding and multifunctional protein found in exocrine fluids such as breast milk and mucosal secretions. Has antimicrobial activity, which depends on the extracellular cation concentration. Antimicrobial properties include bacteriostasis, which is related to its ability to sequester free iron and thus inhibit microbial growth, as well as direct bactericidal properties leading to the release of lipopolysaccharides from the bacterial outer membrane. Can also prevent bacterial biofilm development in P.aeruginosa infection. Has weak antifungal activity against C.albicans. Has anabolic, differentiating and anti-apoptotic effects on osteoblasts and can also inhibit osteoclastogenesis, possibly playing a role in the regulation of bone growth. Promotes binding of species C adenoviruses to epithelial cells, promoting adenovirus infection. Can inhibit papillomavirus infections. Stimulates the TLR4 signaling pathway leading to NF-kappa-B activation and subsequent pro-inflammatory cytokine production while also interfering with the lipopolysaccharide (LPS)-stimulated TLR4 signaling. Inhibits neutrophil granulocyte migration to sites of apoptosis, when secreted by apoptotic cells. Stimulates VEGFA-mediated endothelial cell migration and proliferation. Binds heparin, chondroitin sulfate and possibly other glycosaminoglycans (GAGs). Also binds specifically to pneumococcal surface protein A (PspA), the lipid A portion of bacterial lipopolysaccharide (LPS), lysozyme and DNA. Lactoferricin binds to the bacterial surface and is crucial for the bactericidal functions. Has some antiviral activity against papillomavirus infection. N-terminal region shows strong antifungal activity against C.albicans. Contains two BBXB heparin-binding consensus sequences that appear to form the predominate functional GAG-binding site. Its function is as follows. Has antimicrobial activity and is able to permeabilize different ions through liposomal membranes. Functionally, has opioid antagonist activity. Shows preference for mu-receptor. In terms of biological role, has opioid antagonist activity. Shows higher degrees of preference for kappa-receptors than for mu-receptors. The lactotransferrin transferrin-like domain 1 functions as a serine protease of the peptidase S60 family that cuts arginine rich regions. This function contributes to the antimicrobial activity. Shows a preferential cleavage at -Arg-Ser-Arg-Arg-|- and -Arg-Arg-Ser-Arg-|-, and of Z-Phe-Arg-|-aminomethylcoumarin sites. Its function is as follows. Transcription factor with antiproliferative properties and ability to induce cell cycle arrest. Binds to the DeltaLf response element found in the SKP1, BAX, DCPS, and SELENOH promoters. The chain is Lactotransferrin from Homo sapiens (Human).